Here is a 1046-residue protein sequence, read N- to C-terminus: Phospholipase D zeta 2 (1046 aa).

The PX domain occupies 45-205 (PKAAIVSVSR…KEVCKFLEVS (161 aa)). The PH domain maps to 215–343 (SKMKEGYVTV…WVKAVDEAGC (129 aa)). A PLD phosphodiesterase 1 domain is found at 472–499 (YLWSHHEKIVIVDYQVCFIGGLDLCFGR). Catalysis depends on residues H477, K479, and D484. The segment covering 653-667 (GRGDLKLDSGARQDP) has biased composition (basic and acidic residues). A disordered region spans residues 653–677 (GRGDLKLDSGARQDPGETSEESDLD). One can recognise a PLD phosphodiesterase 2 domain in the interval 847 to 874 (SQIYVHSKLMIVDDRIAVIGSSNINDRS). Active-site residues include H852, K854, and D859.

Belongs to the phospholipase D family. PXPH-PLD subfamily. It depends on Does not require Ca(2+) or any other cation for activity. as a cofactor. Expressed in seedlings, roots, leaves, stems and flowers. Highest expression in roots. Detected only in the meristematic regions up to 4 days after germination and then at later stages in all tissues.

It carries out the reaction a 1,2-diacyl-sn-glycero-3-phosphocholine + H2O = a 1,2-diacyl-sn-glycero-3-phosphate + choline + H(+). In terms of biological role, hydrolyzes glycerol-phospholipids at the terminal phosphodiesteric bond to generate phosphatidic acids (PA). Phosphatidylcholine-selective. Regulates vesicle trafficking and auxin responses. Required for the normal cycling of PIN-2 containing vesicles. Contributes to the supply of inorganic phosphorus for cell metabolism and diacylglycerol moieties for galactolipid synthesis in phosphorus-starved roots. Involved in root elongation during phosphate limitation. In Arabidopsis thaliana (Mouse-ear cress), this protein is Phospholipase D zeta 2.